Here is a 670-residue protein sequence, read N- to C-terminus: Receptor for retinol uptake stra6 (670 aa).

At 1–38 (MSAETVNNYDYSDWYENAAPTKAPVEVIPPCDPTADEG) the chain is on the extracellular side. The helical transmembrane segment at 39-59 (LFHICIAAISLVVMLVLAILA) threads the bilayer. Topologically, residues 60–87 (RRQKLSDNQRGLTGLLSPVNFLDHTQHK) are cytoplasmic. The chain crosses the membrane as a helical span at residues 88-108 (GLAVAVYGVLFCKLVGMVLSH). Over 109–121 (HPLPFTKEVANKE) the chain is Extracellular. The chain crosses the membrane as a helical span at residues 122–142 (FWMILALLYYPALYYPLLACG). The Cytoplasmic portion of the chain corresponds to 143-145 (TLH). A helical membrane pass occupies residues 146–166 (NKVGYVLGSLLSWTHFGILVW). The Extracellular segment spans residues 167–182 (QKVDCPKTPQIYKYYA). A helical membrane pass occupies residues 183-203 (LFGSLPQIACLAFLSFQYPLL). The Cytoplasmic portion of the chain corresponds to 204–274 (LFKGLQNTET…PEDVFRFPLK (71 aa)). A helical transmembrane segment spans residues 275–295 (LAISVVVAFIALYQMALLLIS). Residues 296–346 (GVLPTLHIVRRGVDENIAFLLAGFNIILSNDRQEVVRIVVYYLWCVEICYV) lie on the Extracellular side of the membrane. A helical membrane pass occupies residues 347-367 (SAVTLSCLVNLLMLMRSMVLH). At 368–401 (RSNLKGLYRGDSLNVFNCHRSIRPSRPALVCWMG) the chain is on the cytoplasmic side. The chain crosses the membrane as a helical span at residues 402 to 422 (FTSYQAAFLCLGMAIQTLVFF). The Extracellular segment spans residues 423-452 (ICILFAVFLIIIPILWGTNLMLFHIIGNLW). A helical membrane pass occupies residues 453–473 (PFWLTLVLAALIQHVASRFLF). At 474–488 (IRKDGGTRDLNNRGS) the chain is on the cytoplasmic side. The helical intramembrane region spans 489 to 526 (LFLLSYILFLVNVMIGVVLGIWRVVITALFNIVHLGRL). At 527 to 670 (DISLLNRNVE…KEAESAAASN (144 aa)) the chain is on the cytoplasmic side. Positions 600-626 (VSNAKRARAHWQLLYTLVNNPSLVGSR) are interaction with calmodulin. A disordered region spans residues 640 to 670 (GALSRTSKEGSKKDGSVNEPSKEAESAAASN). Over residues 645 to 664 (TSKEGSKKDGSVNEPSKEAE) the composition is skewed to basic and acidic residues.

Homodimer. Interacts (via C-terminus) with calmodulin.

The protein localises to the cell membrane. In terms of biological role, retinol transporter. Accepts retinol from the extracellular retinol-binding protein rbp4, mediates retinol transport across the cell membrane, and then transmits retinol to the cytoplasmic retinol-binding protein rbp1. Required for normal vitamin A homeostasis. This is Receptor for retinol uptake stra6 from Danio rerio (Zebrafish).